The following is a 134-amino-acid chain: Phosphoribosyl-AMP cyclohydrolase (134 aa).

A Mg(2+)-binding site is contributed by Asp78. Cys79 serves as a coordination point for Zn(2+). Mg(2+)-binding residues include Asp80 and Asp82. Zn(2+) is bound by residues Cys96 and Cys103.

The protein belongs to the PRA-CH family. As to quaternary structure, homodimer. Requires Mg(2+) as cofactor. The cofactor is Zn(2+).

Its subcellular location is the cytoplasm. The enzyme catalyses 1-(5-phospho-beta-D-ribosyl)-5'-AMP + H2O = 1-(5-phospho-beta-D-ribosyl)-5-[(5-phospho-beta-D-ribosylamino)methylideneamino]imidazole-4-carboxamide. The protein operates within amino-acid biosynthesis; L-histidine biosynthesis; L-histidine from 5-phospho-alpha-D-ribose 1-diphosphate: step 3/9. Its function is as follows. Catalyzes the hydrolysis of the adenine ring of phosphoribosyl-AMP. The polypeptide is Phosphoribosyl-AMP cyclohydrolase (Cupriavidus taiwanensis (strain DSM 17343 / BCRC 17206 / CCUG 44338 / CIP 107171 / LMG 19424 / R1) (Ralstonia taiwanensis (strain LMG 19424))).